The following is a 216-amino-acid chain: Small ribosomal subunit protein uS2 (216 aa).

Belongs to the universal ribosomal protein uS2 family.

In Carsonella ruddii (strain PV), this protein is Small ribosomal subunit protein uS2.